The chain runs to 221 residues: MKVSMSLILITLSALVTIAKAYDPSPLQDFCVAIDDPKNGVFVNGKFCKDPKQAKAEDFFSSGLNQAGITNNKVQSNVTTVNVDQIPGLNTLGISLVRIDYAPYGQNPPHTHPRATEILVLVEGTLYVGFVSSNQDNNRLFAKVLNPGDVFVFPIGMIHFQVNIGKTPAVAFAGLSSQNAGVITIADIVFGSTPPINPDILAQAFQLDVNVVKDLEAKFKN.

Positions 1-21 (MKVSMSLILITLSALVTIAKA) are cleaved as a signal peptide. Cys-31 and Cys-48 are joined by a disulfide. The Cupin type-1 domain maps to 76 to 213 (SNVTTVNVDQ…AFQLDVNVVK (138 aa)). Asn-77 carries N-linked (GlcNAc...) asparagine glycosylation. His-110, His-112, Glu-117, and His-159 together coordinate Mn(2+).

This sequence belongs to the germin family. In terms of assembly, oligomer (believed to be a pentamer but probably hexamer).

It localises to the secreted. The protein resides in the extracellular space. It is found in the apoplast. Its function is as follows. May play a role in plant defense. Probably has no oxalate oxidase activity even if the active site is conserved. The chain is Germin-like protein subfamily 1 member 19 from Arabidopsis thaliana (Mouse-ear cress).